Consider the following 106-residue polypeptide: ATP-dependent Clp protease adapter protein ClpS (106 aa).

Belongs to the ClpS family. In terms of assembly, binds to the N-terminal domain of the chaperone ClpA.

Its function is as follows. Involved in the modulation of the specificity of the ClpAP-mediated ATP-dependent protein degradation. This Edwardsiella ictaluri (strain 93-146) protein is ATP-dependent Clp protease adapter protein ClpS.